The sequence spans 167 residues: NADH-quinone oxidoreductase subunit B (167 aa).

Positions 40, 41, 105, and 134 each coordinate [4Fe-4S] cluster.

The protein belongs to the complex I 20 kDa subunit family. NDH-1 is composed of 14 different subunits. Subunits NuoB, C, D, E, F, and G constitute the peripheral sector of the complex. Requires [4Fe-4S] cluster as cofactor.

Its subcellular location is the cell inner membrane. The catalysed reaction is a quinone + NADH + 5 H(+)(in) = a quinol + NAD(+) + 4 H(+)(out). Functionally, NDH-1 shuttles electrons from NADH, via FMN and iron-sulfur (Fe-S) centers, to quinones in the respiratory chain. The immediate electron acceptor for the enzyme in this species is believed to be ubiquinone. Couples the redox reaction to proton translocation (for every two electrons transferred, four hydrogen ions are translocated across the cytoplasmic membrane), and thus conserves the redox energy in a proton gradient. The chain is NADH-quinone oxidoreductase subunit B from Campylobacter jejuni (strain RM1221).